A 179-amino-acid polypeptide reads, in one-letter code: Large ribosomal subunit protein uL5 (179 aa).

It belongs to the universal ribosomal protein uL5 family. Part of the 50S ribosomal subunit; part of the 5S rRNA/L5/L18/L25 subcomplex. Contacts the 5S rRNA and the P site tRNA. Forms a bridge to the 30S subunit in the 70S ribosome.

This is one of the proteins that bind and probably mediate the attachment of the 5S RNA into the large ribosomal subunit, where it forms part of the central protuberance. In the 70S ribosome it contacts protein S13 of the 30S subunit (bridge B1b), connecting the 2 subunits; this bridge is implicated in subunit movement. Contacts the P site tRNA; the 5S rRNA and some of its associated proteins might help stabilize positioning of ribosome-bound tRNAs. This chain is Large ribosomal subunit protein uL5, found in Pseudomonas entomophila (strain L48).